A 327-amino-acid polypeptide reads, in one-letter code: Elongation factor P--(R)-beta-lysine ligase (327 aa).

80–82 (SPE) is a substrate binding site. Residues 104 to 106 (RNE) and Asn113 each bind ATP. Tyr122 serves as a coordination point for substrate. ATP is bound at residue 246–247 (EL). A substrate-binding site is contributed by Glu253. Gly302 is an ATP binding site.

This sequence belongs to the class-II aminoacyl-tRNA synthetase family. EpmA subfamily. In terms of assembly, homodimer.

The catalysed reaction is D-beta-lysine + L-lysyl-[protein] + ATP = N(6)-((3R)-3,6-diaminohexanoyl)-L-lysyl-[protein] + AMP + diphosphate + H(+). Its function is as follows. With EpmB is involved in the beta-lysylation step of the post-translational modification of translation elongation factor P (EF-P). Catalyzes the ATP-dependent activation of (R)-beta-lysine produced by EpmB, forming a lysyl-adenylate, from which the beta-lysyl moiety is then transferred to the epsilon-amino group of a conserved specific lysine residue in EF-P. The polypeptide is Elongation factor P--(R)-beta-lysine ligase (Haemophilus ducreyi (strain 35000HP / ATCC 700724)).